Here is a 509-residue protein sequence, read N- to C-terminus: Cation transporter HKT2;4 (509 aa).

Residues 1-32 are Cytoplasmic-facing; sequence MPIRLHIFVSSARHAINSSALICRFIAFHLSP. Helical transmembrane passes span 33 to 53 and 96 to 116; these read LLIH…ALVV and VLTL…GLVL. Residues 117 to 164 are Cytoplasmic-facing; it reads ESSKQNKHDPENRRVSSVTVCEQSHLEEAIPQTPSMNSTDIKRSCHKY. The next 2 helical transmembrane spans lie at 165 to 185 and 237 to 257; these read LVFV…LLVF and GLLL…PMFL. At 258 to 296 the chain is on the cytoplasmic side; the sequence is RLVIWALRGLRLAKAEEPDFMMNNSSSVGFSHLLPNLQT. 2 consecutive transmembrane segments (helical) span residues 297-317 and 353-373; these read IFLA…FCCL and CSLV…TPSL. Residues 374–400 are Cytoplasmic-facing; it reads TKLFSACQDHKQIGPESDDRTSKGKPF. Helical transmembrane passes span 401–421 and 476–496; these read LKTM…LVCI and SFSG…MLYG. Residues 497-509 are Cytoplasmic-facing; the sequence is RLNSKDSTSARTR.

The protein belongs to the TrkH potassium transport family. HKT (TC 2.A.38.3) subfamily. In terms of tissue distribution, expressed in spikelets, leaf blades, leaf sheaths, internodes, nodes, the base of stems and roots.

The protein resides in the cell membrane. The enzyme catalyses K(+)(in) = K(+)(out). It carries out the reaction Mg(2+)(in) = Mg(2+)(out). It catalyses the reaction Ca(2+)(in) = Ca(2+)(out). High-affinity potassium transporter that does not show potassium-sodium cotransport. Potassium transport seems to be independent of sodium. Mediates transport of the divalent cations magnesium and calcium in the absence of competing potassium ions. Selectivity for potassium is dominant over divalent cations, and magnesium and calcium transport may be small and may depend on competing potassium concentrations. The protein is Cation transporter HKT2;4 of Oryza sativa subsp. japonica (Rice).